Here is a 185-residue protein sequence, read N- to C-terminus: Protein GrpE (185 aa).

A disordered region spans residues 1 to 40 (MSEEKKDEILEQETVETKEEIKTEEAEQKTESLEEKVARL).

Belongs to the GrpE family. Homodimer.

The protein resides in the cytoplasm. Functionally, participates actively in the response to hyperosmotic and heat shock by preventing the aggregation of stress-denatured proteins, in association with DnaK and GrpE. It is the nucleotide exchange factor for DnaK and may function as a thermosensor. Unfolded proteins bind initially to DnaJ; upon interaction with the DnaJ-bound protein, DnaK hydrolyzes its bound ATP, resulting in the formation of a stable complex. GrpE releases ADP from DnaK; ATP binding to DnaK triggers the release of the substrate protein, thus completing the reaction cycle. Several rounds of ATP-dependent interactions between DnaJ, DnaK and GrpE are required for fully efficient folding. The polypeptide is Protein GrpE (Aliarcobacter butzleri (strain RM4018) (Arcobacter butzleri)).